A 952-amino-acid polypeptide reads, in one-letter code: Inter-alpha-trypsin inhibitor heavy chain H5 (952 aa).

An N-terminal signal peptide occupies residues 1–17 (MLLLLGLCLGLPLFSES). The region spanning 35 to 161 (VPRQLRLLQR…KAAFFLSYEE (127 aa)) is the VIT domain. N-linked (GlcNAc...) asparagine glycosylation is found at asparagine 97, asparagine 127, asparagine 136, and asparagine 231. Residues 113–131 (QKDKKSSESVKDKRNRTSD) show a composition bias toward basic and acidic residues. The disordered stretch occupies residues 113-138 (QKDKKSSESVKDKRNRTSDDNEENGS). Residues 295–478 (NVVFVLDISA…AQLIGFYDEI (184 aa)) enclose the VWFA domain. Residues asparagine 508, asparagine 776, asparagine 795, and asparagine 862 are each glycosylated (N-linked (GlcNAc...) asparagine). The disordered stretch occupies residues 933–952 (ALGLSTPRKPETDRPHEESV). Basic and acidic residues predominate over residues 940–952 (RKPETDRPHEESV).

The protein belongs to the ITIH family.

It is found in the secreted. In terms of biological role, may act as a tumor suppressor. The protein is Inter-alpha-trypsin inhibitor heavy chain H5 (Itih5) of Mus musculus (Mouse).